Here is a 165-residue protein sequence, read N- to C-terminus: Crossover junction endodeoxyribonuclease RuvC (165 aa).

Active-site residues include D8, E69, and H141. Mg(2+)-binding residues include D8, E69, and H141.

It belongs to the RuvC family. Homodimer which binds Holliday junction (HJ) DNA. The HJ becomes 2-fold symmetrical on binding to RuvC with unstacked arms; it has a different conformation from HJ DNA in complex with RuvA. In the full resolvosome a probable DNA-RuvA(4)-RuvB(12)-RuvC(2) complex forms which resolves the HJ. The cofactor is Mg(2+).

The protein localises to the cytoplasm. It carries out the reaction Endonucleolytic cleavage at a junction such as a reciprocal single-stranded crossover between two homologous DNA duplexes (Holliday junction).. Functionally, the RuvA-RuvB-RuvC complex processes Holliday junction (HJ) DNA during genetic recombination and DNA repair. Endonuclease that resolves HJ intermediates. Cleaves cruciform DNA by making single-stranded nicks across the HJ at symmetrical positions within the homologous arms, yielding a 5'-phosphate and a 3'-hydroxyl group; requires a central core of homology in the junction. The consensus cleavage sequence is 5'-(A/T)TT(C/G)-3'. Cleavage occurs on the 3'-side of the TT dinucleotide at the point of strand exchange. HJ branch migration catalyzed by RuvA-RuvB allows RuvC to scan DNA until it finds its consensus sequence, where it cleaves and resolves the cruciform DNA. The sequence is that of Crossover junction endodeoxyribonuclease RuvC from Wolbachia pipientis subsp. Culex pipiens (strain wPip).